We begin with the raw amino-acid sequence, 653 residues long: MTLWEDFMFEIKSKDGLGRTGILKTEHGTVRTPALMPVIHPGKQTIDVKGPGAEIVITNAYIIYRNPELRERALSDGVHRLIDFDGPIMTDSGSFQLSEYGDIEVENPEIIRFQDEIGTDIGTSLDIPTPPGVSHRRAIEEVEVTLERARESIEYRERMMLNAVVQGSTHPDLRRYCASRLAELPVELHPIGAVVPLMESYRYRELVDAVLSSVSELPPSRPRHLMGAGHPMLFALAVSMGCDLFDSAAYILYAEDDRLLSTEGTYKLENLQEMPCSCSVCTDYTPSELMGMDREERRNLIAEHNLHVSFAEIRKVRQAIHDGNLMELVEERCRAHPRLLEGYRRMSEYLDLIEKFEPRSKRSAFFYTGPESLGRVEVHRHLKRVKEHLGERLALVAPSRRPYSSSLPARIGGFSSLRPQSGGPWRVVVVDLPFGIIPLELDQVYPLAQSDAPGIMDLDGEEFLRGLVRDLMDGDAIVDDALCSELGIELPYKYMGEVETTVDDLDRVRMVADYQFGMGAGELLFTDDVRIERSRNTGKIRHIYAGDELICTMRASDGLLVLGAEGAVRLHKGTDYPAWRVAVNEESEPFARKGKSVFAKFIIDCDNNIRANDEVLIVNADDELLATGKALLCAEEMMDLNHGQAVKTRKGGF.

The active-site Nucleophile is the Asp-91. Substrate-binding residues include Asp-126 and Ala-193. The Zn(2+) site is built by Cys-276, Cys-278, and Cys-281. The region spanning 578 to 653 (AWRVAVNEES…QAVKTRKGGF (76 aa)) is the PUA domain.

This sequence belongs to the archaeosine tRNA-ribosyltransferase family. Requires Zn(2+) as cofactor.

The enzyme catalyses guanosine(15) in tRNA + 7-cyano-7-deazaguanine = 7-cyano-7-carbaguanosine(15) in tRNA + guanine. It participates in tRNA modification; archaeosine-tRNA biosynthesis. Functionally, exchanges the guanine residue with 7-cyano-7-deazaguanine (preQ0) at position 15 in the dihydrouridine loop (D-loop) of archaeal tRNAs. In Methanothermobacter thermautotrophicus (strain ATCC 29096 / DSM 1053 / JCM 10044 / NBRC 100330 / Delta H) (Methanobacterium thermoautotrophicum), this protein is tRNA-guanine(15) transglycosylase.